Here is a 219-residue protein sequence, read N- to C-terminus: Arginine transport system permease protein ArtQ (219 aa).

5 helical membrane-spanning segments follow: residues 19–39 (LAITLKIVVVSAIIGLILGIV), 51–73 (FIWIADFYTSVFRGTPLVLQLMI), 88–108 (QFWAAVVALSLNSAAYVSEII), 149–169 (AIVNELITLTKESAIVTVIGL), and 187–207 (LEPLIIAGLIYYVLVLILTFI). The region spanning 19–208 (LAITLKIVVV…VLVLILTFIG (190 aa)) is the ABC transmembrane type-1 domain.

This sequence belongs to the binding-protein-dependent transport system permease family. HisMQ subfamily.

The protein resides in the cell membrane. Functionally, part of a binding-protein-dependent transport system for arginine. Probably responsible for the translocation of the substrate across the membrane. The chain is Arginine transport system permease protein ArtQ (artQ) from Bacillus subtilis (strain 168).